Reading from the N-terminus, the 54-residue chain is Conotoxin mr5.4b (54 aa).

Residues Ile1 to Ala14 form the signal peptide. A propeptide spanning residues Gln15–Asn40 is cleaved from the precursor. Glu52 carries the 4-carboxyglutamate modification.

The protein belongs to the conotoxin T superfamily. Contains 2 disulfide bonds that can be either 'C1-C3, C2-C4' or 'C1-C4, C2-C3', since these disulfide connectivities have been observed for conotoxins with cysteine framework V (for examples, see AC P0DQQ7 and AC P81755). In terms of tissue distribution, expressed by the venom duct.

It localises to the secreted. In Conus marmoreus (Marble cone), this protein is Conotoxin mr5.4b.